A 425-amino-acid chain; its full sequence is Apolipoprotein N-acyltransferase (425 aa).

The next 6 membrane-spanning stretches (helical) occupy residues 12 to 32 (LLACMFVSSVYVNAVLDAYAI), 34 to 54 (NPYISITLTSLLAPLSMLAFL), 60 to 80 (SAFALGFFVGALLFYWCALSF), 88 to 108 (LLPLIIVLIALVYGVLFYLLL), 120 to 140 (FLGSSFIHPFGFDWLVPDSFF), and 142 to 162 (YSVFRVDKLSLGLVFLACIFL). A CN hydrolase domain is found at 201 to 425 (VSTKTPQDLK…LGDILFRKRS (225 aa)). The active-site Proton acceptor is E242. K296 is a catalytic residue. C349 serves as the catalytic Nucleophile.

Belongs to the CN hydrolase family. Apolipoprotein N-acyltransferase subfamily.

Its subcellular location is the cell inner membrane. It catalyses the reaction N-terminal S-1,2-diacyl-sn-glyceryl-L-cysteinyl-[lipoprotein] + a glycerophospholipid = N-acyl-S-1,2-diacyl-sn-glyceryl-L-cysteinyl-[lipoprotein] + a 2-acyl-sn-glycero-3-phospholipid + H(+). It functions in the pathway protein modification; lipoprotein biosynthesis (N-acyl transfer). Its function is as follows. Catalyzes the phospholipid dependent N-acylation of the N-terminal cysteine of apolipoprotein, the last step in lipoprotein maturation. The protein is Apolipoprotein N-acyltransferase of Helicobacter pylori (strain ATCC 700392 / 26695) (Campylobacter pylori).